The sequence spans 273 residues: Thiazole synthase (273 aa).

Lysine 110 serves as the catalytic Schiff-base intermediate with DXP. 1-deoxy-D-xylulose 5-phosphate contacts are provided by residues glycine 171, 198 to 199 (AG), and 220 to 221 (NS).

It belongs to the ThiG family. As to quaternary structure, homotetramer. Forms heterodimers with either ThiH or ThiS.

It localises to the cytoplasm. It carries out the reaction [ThiS sulfur-carrier protein]-C-terminal-Gly-aminoethanethioate + 2-iminoacetate + 1-deoxy-D-xylulose 5-phosphate = [ThiS sulfur-carrier protein]-C-terminal Gly-Gly + 2-[(2R,5Z)-2-carboxy-4-methylthiazol-5(2H)-ylidene]ethyl phosphate + 2 H2O + H(+). Its pathway is cofactor biosynthesis; thiamine diphosphate biosynthesis. In terms of biological role, catalyzes the rearrangement of 1-deoxy-D-xylulose 5-phosphate (DXP) to produce the thiazole phosphate moiety of thiamine. Sulfur is provided by the thiocarboxylate moiety of the carrier protein ThiS. In vitro, sulfur can be provided by H(2)S. In Hydrogenovibrio crunogenus (strain DSM 25203 / XCL-2) (Thiomicrospira crunogena), this protein is Thiazole synthase.